We begin with the raw amino-acid sequence, 586 residues long: Protein BONZAI 2 (586 aa).

Glycine 2 carries N-myristoyl glycine lipidation. 2 consecutive C2 domains span residues 25-164 (SAAT…ALEL) and 176-303 (PQHN…NLAL). Ca(2+) is bound by residues aspartate 62, aspartate 68, aspartate 121, and aspartate 123. Residues 344–563 (NFMVAIDFTA…SVVEALLAEL (220 aa)) form the VWFA domain.

Belongs to the copine family. In terms of assembly, interacts with BAP1 and BAP2. It depends on Ca(2+) as a cofactor. In terms of tissue distribution, expressed in roots, leaves and stems. Expressed in young growing tissues.

The protein localises to the cell membrane. Functionally, negative regulator of cell death and defense responses. May repress a number of R genes and may have effects in promoting growth and development. May function in membrane trafficking and in fusion of vesicles with plasma membrane. The protein is Protein BONZAI 2 (BON2) of Arabidopsis thaliana (Mouse-ear cress).